Consider the following 199-residue polypeptide: Potassium-transporting ATPase KdpC subunit (199 aa).

A helical membrane pass occupies residues 21-43 (LALLFVCGVVYTGTVTQLGGALF).

Belongs to the KdpC family. The system is composed of three essential subunits: KdpA, KdpB and KdpC.

It is found in the cell inner membrane. In terms of biological role, part of the high-affinity ATP-driven potassium transport (or Kdp) system, which catalyzes the hydrolysis of ATP coupled with the electrogenic transport of potassium into the cytoplasm. This subunit acts as a catalytic chaperone that increases the ATP-binding affinity of the ATP-hydrolyzing subunit KdpB by the formation of a transient KdpB/KdpC/ATP ternary complex. The chain is Potassium-transporting ATPase KdpC subunit from Shewanella putrefaciens (strain CN-32 / ATCC BAA-453).